Reading from the N-terminus, the 650-residue chain is Secretin OutD (650 aa).

Positions 1 to 18 (MLLLSGSVLLMASSLAWS) are cleaved as a signal peptide. The segment at 20 to 115 (EFSASFKGTD…LATDRQPGIG (96 aa)) is N0. The tract at residues 117 to 181 (EVVTRVVPVN…TIVERVDQTG (65 aa)) is N1. Residues 182–255 (DRNVTTIPLS…MVKQLDRQQA (74 aa)) form an N2 region. The tract at residues 258-330 (GNTKVIYLKY…DLEQVIAQLD (73 aa)) is N3. Residues 335–585 (QVLVEAIIAE…LFIRPSIIRD (251 aa)) form a secretin region. The interval 587–650 (SQFQSASASK…IVAFYPAGGK (64 aa)) is s domain.

This sequence belongs to the bacterial secretin family. GSP D subfamily. Forms a cylindrical channel with 15 subunits.

Its subcellular location is the cell outer membrane. Functionally, involved in a type II secretion system (T2SS, formerly general secretion pathway, GSP) for the export of proteins. Required for the translocation of the multiple pectic enzymes. This subunit forms the outer membrane channel. In Pectobacterium carotovorum subsp. carotovorum (Erwinia carotovora subsp. carotovora), this protein is Secretin OutD (outD).